A 519-amino-acid polypeptide reads, in one-letter code: Cell division cycle protein 20 homolog B (519 aa).

The tract at residues 77-106 (WQLSPARDPESSSSVEEGPPSHTPESLASG) is disordered. The span at 87–96 (SSSSVEEGPP) shows a compositional bias: low complexity. 6 WD repeats span residues 229-266 (RNDY…WIEN), 271-310 (VCCH…QLRN), 353-392 (YHKE…GVQG), 399-441 (PQST…NIQT), 443-484 (STQS…RSGG), and 487-519 (GHRD…WKCC).

It belongs to the WD repeat CDC20/Fizzy family. Expressed in multiciliated cells (MCCs).

It localises to the cytoplasm. In terms of biological role, protein regulator of centriole-deuterosome disengagement and subsequently participates in the ciliogenesis in multiciliated cells (MCCs). The protein is Cell division cycle protein 20 homolog B of Mus musculus (Mouse).